Here is a 427-residue protein sequence, read N- to C-terminus: 3-phosphoshikimate 1-carboxyvinyltransferase (427 aa).

Residues Lys22, Ser23, and Arg27 each coordinate 3-phosphoshikimate. Lys22 is a binding site for phosphoenolpyruvate. Positions 93 and 122 each coordinate phosphoenolpyruvate. Positions 167, 169, 315, and 342 each coordinate 3-phosphoshikimate. Residue Gln169 participates in phosphoenolpyruvate binding. Asp315 serves as the catalytic Proton acceptor. Arg346 and Arg387 together coordinate phosphoenolpyruvate.

Belongs to the EPSP synthase family. In terms of assembly, monomer.

It is found in the cytoplasm. The enzyme catalyses 3-phosphoshikimate + phosphoenolpyruvate = 5-O-(1-carboxyvinyl)-3-phosphoshikimate + phosphate. The protein operates within metabolic intermediate biosynthesis; chorismate biosynthesis; chorismate from D-erythrose 4-phosphate and phosphoenolpyruvate: step 6/7. Its function is as follows. Catalyzes the transfer of the enolpyruvyl moiety of phosphoenolpyruvate (PEP) to the 5-hydroxyl of shikimate-3-phosphate (S3P) to produce enolpyruvyl shikimate-3-phosphate and inorganic phosphate. The chain is 3-phosphoshikimate 1-carboxyvinyltransferase from Thermus thermophilus (strain ATCC BAA-163 / DSM 7039 / HB27).